The chain runs to 556 residues: Acetyl-coenzyme A thioesterase (556 aa).

Residues Ala6–Gly118 form the HotDog ACOT-type 1 domain. At Lys34 the chain carries N6-succinyllysine. Residues Thr54–Ser56 and Ser83–Ser85 each bind CoA. Residue Lys97 is modified to N6-succinyllysine. Arg145 serves as a coordination point for CoA. Lys160 and Lys229 each carry N6-succinyllysine. In terms of domain architecture, HotDog ACOT-type 2 spans Met180 to Gln295. Lys235–Arg237 lines the CoA pocket. The 210-residue stretch at Gly327–Ala536 folds into the START domain.

Homodimer or homotetramer.

The protein resides in the cytoplasm. It is found in the cytosol. It carries out the reaction acetyl-CoA + H2O = acetate + CoA + H(+). It catalyses the reaction butanoyl-CoA + H2O = butanoate + CoA + H(+). The catalysed reaction is hexanoyl-CoA + H2O = hexanoate + CoA + H(+). Its pathway is lipid metabolism; fatty acid metabolism. With respect to regulation, allosterically regulated by ATP (activator) and ADP (inhibitor). Cold labile, it dissociates into inactive monomers at low temperature. Catalyzes the hydrolysis of acyl-CoAs into free fatty acids and coenzyme A (CoASH), regulating their respective intracellular levels. Preferentially hydrolyzes acetyl-CoA. This chain is Acetyl-coenzyme A thioesterase (Acot12), found in Mus musculus (Mouse).